The following is a 400-amino-acid chain: Argininosuccinate synthase (400 aa).

ATP contacts are provided by residues 10 to 18 (AYSGGVDTS) and A38. Y89 is a binding site for L-citrulline. Residue G119 coordinates ATP. L-aspartate contacts are provided by T121, N125, and D126. N125 serves as a coordination point for L-citrulline. The L-citrulline site is built by R129, S177, S186, E262, and Y274.

The protein belongs to the argininosuccinate synthase family. Type 1 subfamily. In terms of assembly, homotetramer.

It is found in the cytoplasm. It catalyses the reaction L-citrulline + L-aspartate + ATP = 2-(N(omega)-L-arginino)succinate + AMP + diphosphate + H(+). It functions in the pathway amino-acid biosynthesis; L-arginine biosynthesis; L-arginine from L-ornithine and carbamoyl phosphate: step 2/3. This is Argininosuccinate synthase from Crocosphaera subtropica (strain ATCC 51142 / BH68) (Cyanothece sp. (strain ATCC 51142)).